We begin with the raw amino-acid sequence, 204 residues long: Tat proofreading chaperone DmsD (204 aa).

The protein belongs to the TorD/DmsD family. DmsD subfamily.

Its function is as follows. Required for biogenesis/assembly of DMSO reductase, but not for the interaction of the DmsA signal peptide with the Tat system. May be part of a chaperone cascade complex that facilitates a folding-maturation pathway for the substrate protein. The protein is Tat proofreading chaperone DmsD of Salmonella paratyphi A (strain ATCC 9150 / SARB42).